Consider the following 465-residue polypeptide: Pancreatic triacylglycerol lipase (465 aa).

The first 16 residues, 1-16, serve as a signal peptide directing secretion; it reads MLLLWILSLFLETVAG. Cystine bridges form between cysteine 20–cysteine 26 and cysteine 107–cysteine 118. The Nucleophile role is filled by serine 169. Aspartate 193 serves as the catalytic Charge relay system. The Ca(2+) site is built by glutamate 204, arginine 207, aspartate 209, and aspartate 212. A disulfide bond links cysteine 254 and cysteine 278. The active-site Charge relay system is histidine 280. Intrachain disulfides connect cysteine 302–cysteine 313 and cysteine 316–cysteine 321. N-linked (GlcNAc...) asparagine glycosylation is found at asparagine 351, asparagine 398, and asparagine 425. Positions 355–465 constitute a PLAT domain; sequence WRYRIAVTLS…EEVLLTLQPC (111 aa). Cysteine 449 and cysteine 465 are disulfide-bonded.

Belongs to the AB hydrolase superfamily. Lipase family. As to quaternary structure, forms a 1:1 stoichiometric complex with (pro)colipase/CLPS.

The protein localises to the secreted. The catalysed reaction is a triacylglycerol + H2O = a diacylglycerol + a fatty acid + H(+). It catalyses the reaction 1,2,3-tributanoylglycerol + H2O = dibutanoylglycerol + butanoate + H(+). It carries out the reaction 1,2,3-tri-(9Z-octadecenoyl)-glycerol + H2O = di-(9Z)-octadecenoylglycerol + (9Z)-octadecenoate + H(+). The enzyme catalyses all-trans-retinyl hexadecanoate + H2O = all-trans-retinol + hexadecanoate + H(+). The catalysed reaction is 1,2-di-(9Z-octadecenoyl)-glycerol + H2O = (9Z-octadecenoyl)-glycerol + (9Z)-octadecenoate + H(+). Inhibited by bile salts, is reactivated by (pro)colipase/CLPS. In terms of biological role, plays an important role in fat metabolism. It preferentially splits the esters of long-chain fatty acids at positions 1 and 3, producing mainly 2-monoacylglycerol and free fatty acids, and shows considerably higher activity against insoluble emulsified substrates than against soluble ones. In Cavia porcellus (Guinea pig), this protein is Pancreatic triacylglycerol lipase (PNLIP).